The following is a 240-amino-acid chain: Cysteine-rich venom protein ablomin (240 aa).

The signal sequence occupies residues 1–19; sequence MIVFIVLPILAAVLQQSSG. Positions 38-166 constitute an SCP domain; sequence VDLHNSLRRS…EYSYFYVCQY (129 aa). Disulfide bonds link Cys75/Cys153, Cys92/Cys167, Cys148/Cys164, Cys186/Cys193, Cys189/Cys198, Cys202/Cys235, Cys211/Cys229, and Cys220/Cys233. The region spanning 202 to 235 is the ShKT domain; sequence CTQEDVFTNCNSLVQQSNCQHNYIKTNCPASCFC.

This sequence belongs to the CRISP family. Expressed by the venom gland.

It localises to the secreted. Blocks contraction of smooth muscle elicited by high potassium-induced depolarization, but does not block caffeine-stimulated contraction. Since high potassium-treatment activates voltage-gated channels and caffeine exposure activates ryanodine receptors, this toxin may target L-type voltage-gated calcium channels (Cav) (and not ryanodine receptors) on smooth muscle. This toxin also shows a little inhibition on cyclic nucleotide-gated CNGA1 channel. The polypeptide is Cysteine-rich venom protein ablomin (Gloydius blomhoffii (Mamushi)).